The primary structure comprises 425 residues: 3-phosphoshikimate 1-carboxyvinyltransferase (425 aa).

Residues lysine 20, serine 21, and arginine 25 each contribute to the 3-phosphoshikimate site. Lysine 20 is a binding site for phosphoenolpyruvate. The phosphoenolpyruvate site is built by glycine 92 and arginine 120. Serine 165, glutamine 167, aspartate 312, and lysine 339 together coordinate 3-phosphoshikimate. Glutamine 167 contacts phosphoenolpyruvate. The Proton acceptor role is filled by aspartate 312. The phosphoenolpyruvate site is built by arginine 343 and arginine 385.

Belongs to the EPSP synthase family. As to quaternary structure, monomer.

The protein resides in the cytoplasm. The catalysed reaction is 3-phosphoshikimate + phosphoenolpyruvate = 5-O-(1-carboxyvinyl)-3-phosphoshikimate + phosphate. The protein operates within metabolic intermediate biosynthesis; chorismate biosynthesis; chorismate from D-erythrose 4-phosphate and phosphoenolpyruvate: step 6/7. In terms of biological role, catalyzes the transfer of the enolpyruvyl moiety of phosphoenolpyruvate (PEP) to the 5-hydroxyl of shikimate-3-phosphate (S3P) to produce enolpyruvyl shikimate-3-phosphate and inorganic phosphate. The protein is 3-phosphoshikimate 1-carboxyvinyltransferase of Alkaliphilus metalliredigens (strain QYMF).